The chain runs to 254 residues: Ribosomal RNA small subunit methyltransferase G (254 aa).

Residues Gly92, 143 to 144, and Arg156 contribute to the S-adenosyl-L-methionine site; that span reads AE.

Belongs to the methyltransferase superfamily. RNA methyltransferase RsmG family.

The protein resides in the cytoplasm. In terms of biological role, specifically methylates the N7 position of a guanine in 16S rRNA. The sequence is that of Ribosomal RNA small subunit methyltransferase G from Leptospira interrogans serogroup Icterohaemorrhagiae serovar copenhageni (strain Fiocruz L1-130).